Consider the following 434-residue polypeptide: Glutamyl-tRNA reductase (434 aa).

Substrate is bound by residues 49 to 52 (TCNR), serine 109, 114 to 116 (EPQ), and glutamine 120. Residue cysteine 50 is the Nucleophile of the active site. Position 189–194 (189–194 (GAGEMC)) interacts with NADP(+).

This sequence belongs to the glutamyl-tRNA reductase family. As to quaternary structure, homodimer.

The enzyme catalyses (S)-4-amino-5-oxopentanoate + tRNA(Glu) + NADP(+) = L-glutamyl-tRNA(Glu) + NADPH + H(+). Its pathway is porphyrin-containing compound metabolism; protoporphyrin-IX biosynthesis; 5-aminolevulinate from L-glutamyl-tRNA(Glu): step 1/2. Functionally, catalyzes the NADPH-dependent reduction of glutamyl-tRNA(Glu) to glutamate 1-semialdehyde (GSA). This chain is Glutamyl-tRNA reductase, found in Citrifermentans bemidjiense (strain ATCC BAA-1014 / DSM 16622 / JCM 12645 / Bem) (Geobacter bemidjiensis).